A 296-amino-acid chain; its full sequence is Large ribosomal subunit protein uL18B (296 aa).

Residues Pro-251–Ser-296 form a disordered region. Positions Lys-255–Arg-268 are enriched in basic residues. Positions Leu-271 to Ala-281 are enriched in basic and acidic residues.

This sequence belongs to the universal ribosomal protein uL18 family. Component of the large ribosomal subunit (LSU). Part of a LSU subcomplex, the 5S RNP which is composed of the 5S RNA, RPL5 and RPL11.

Its subcellular location is the cytoplasm. The protein resides in the nucleus. It is found in the nucleolus. Component of the ribosome, a large ribonucleoprotein complex responsible for the synthesis of proteins in the cell. The small ribosomal subunit (SSU) binds messenger RNAs (mRNAs) and translates the encoded message by selecting cognate aminoacyl-transfer RNA (tRNA) molecules. The large subunit (LSU) contains the ribosomal catalytic site termed the peptidyl transferase center (PTC), which catalyzes the formation of peptide bonds, thereby polymerizing the amino acids delivered by tRNAs into a polypeptide chain. The nascent polypeptides leave the ribosome through a tunnel in the LSU and interact with protein factors that function in enzymatic processing, targeting, and the membrane insertion of nascent chains at the exit of the ribosomal tunnel. As part of the 5S RNP/5S ribonucleoprotein particle it is an essential component of the LSU, required for its formation and the maturation of rRNAs. It also couples ribosome biogenesis to p53/TP53 activation. As part of the 5S RNP it accumulates in the nucleoplasm and inhibits MDM2, when ribosome biogenesis is perturbed, mediating the stabilization and the activation of TP53. The sequence is that of Large ribosomal subunit protein uL18B (rpl5-b) from Xenopus laevis (African clawed frog).